We begin with the raw amino-acid sequence, 60 residues long: Large ribosomal subunit protein bL32 (60 aa).

Residues 1 to 23 show a composition bias toward basic residues; sequence MAKHPVPKKKTSKSKRDMRRSHH. Residues 1–26 form a disordered region; the sequence is MAKHPVPKKKTSKSKRDMRRSHHALT.

The protein belongs to the bacterial ribosomal protein bL32 family.

The sequence is that of Large ribosomal subunit protein bL32 from Deinococcus deserti (strain DSM 17065 / CIP 109153 / LMG 22923 / VCD115).